Here is a 1089-residue protein sequence, read N- to C-terminus: SUMO-specific isopeptidase USPL1 (1089 aa).

Residues Leu90–Ser128 are disordered. A USP domain is found at Val215–Lys488. Cys224 acts as the Nucleophile in catalysis. Residues Cys224–Val483 are SUMO-binding. The Proton acceptor role is filled by His444. 4 disordered regions span residues Asp687–Gln739, Ile791–Leu817, Leu835–Asp868, and Leu891–Pro928. Residues Thr719–Gln733 are compositionally biased toward polar residues. A compositionally biased stretch (basic residues) spans Ile791–Lys803. Position 894 is a phosphoserine (Ser894). Over residues Pro895 to Pro907 the composition is skewed to basic and acidic residues.

It belongs to the peptidase C19 family. Interacts with ELL.

The protein resides in the nucleus. The protein localises to the cajal body. SUMO-specific isopeptidase involved in protein desumoylation. Specifically binds SUMO proteins with a higher affinity for SUMO2 and SUMO3 which it cleaves more efficiently. Also able to process full-length SUMO proteins to their mature forms. Plays a key role in RNA polymerase-II-mediated snRNA transcription in the Cajal bodies. Is a component of complexes that can bind to U snRNA genes. The protein is SUMO-specific isopeptidase USPL1 (Uspl1) of Mus musculus (Mouse).